Reading from the N-terminus, the 688-residue chain is Glycine--tRNA ligase beta subunit (688 aa).

Belongs to the class-II aminoacyl-tRNA synthetase family. Tetramer of two alpha and two beta subunits.

The protein localises to the cytoplasm. The enzyme catalyses tRNA(Gly) + glycine + ATP = glycyl-tRNA(Gly) + AMP + diphosphate. The protein is Glycine--tRNA ligase beta subunit of Haemophilus influenzae (strain PittGG).